We begin with the raw amino-acid sequence, 426 residues long: Glutamyl-tRNA reductase (426 aa).

Substrate contacts are provided by residues 49–52 (TCNR), serine 110, 115–117 (EAQ), and glutamine 121. The Nucleophile role is filled by cysteine 50. 191–196 (GAGEMA) serves as a coordination point for NADP(+).

The protein belongs to the glutamyl-tRNA reductase family. As to quaternary structure, homodimer.

It catalyses the reaction (S)-4-amino-5-oxopentanoate + tRNA(Glu) + NADP(+) = L-glutamyl-tRNA(Glu) + NADPH + H(+). It functions in the pathway porphyrin-containing compound metabolism; protoporphyrin-IX biosynthesis; 5-aminolevulinate from L-glutamyl-tRNA(Glu): step 1/2. In terms of biological role, catalyzes the NADPH-dependent reduction of glutamyl-tRNA(Glu) to glutamate 1-semialdehyde (GSA). This Rhodopirellula baltica (strain DSM 10527 / NCIMB 13988 / SH1) protein is Glutamyl-tRNA reductase.